The chain runs to 99 residues: U1-theraphotoxin-Lsp1a (99 aa).

Positions 1–23 are cleaved as a signal peptide; the sequence is MRSLTLAALLLCSLLLVFHTSAA. Positions 24–50 are excised as a propeptide; sequence AELEAQEGHLMIPGDTDTALETVDDER. Cystine bridges form between C54-C67, C58-C91, C72-C74, and C85-C96.

Belongs to the neurotoxin 12 (Hwtx-2) family. 04 (lasiotoxin) subfamily. Expressed by the venom gland.

It localises to the secreted. Its function is as follows. Toxin that causes irreversible contractile paralysis into adult Aedes aegypti resulting in 100% mortality after 24 hours. This Lasiodora sp. (strain IBSP 8539) (Brazilian salmon pink birdeater) protein is U1-theraphotoxin-Lsp1a.